Reading from the N-terminus, the 148-residue chain is Small ribosomal subunit protein eS6 (148 aa).

It belongs to the eukaryotic ribosomal protein eS6 family.

The polypeptide is Small ribosomal subunit protein eS6 (Pyrobaculum neutrophilum (strain DSM 2338 / JCM 9278 / NBRC 100436 / V24Sta) (Thermoproteus neutrophilus)).